A 691-amino-acid polypeptide reads, in one-letter code: DNA-directed RNA polymerase subunit beta' (691 aa).

The Zn(2+) site is built by cysteine 69, cysteine 71, cysteine 87, and cysteine 90. 3 residues coordinate Mg(2+): aspartate 489, aspartate 491, and aspartate 493.

It belongs to the RNA polymerase beta' chain family. RpoC1 subfamily. In plastids the minimal PEP RNA polymerase catalytic core is composed of four subunits: alpha, beta, beta', and beta''. When a (nuclear-encoded) sigma factor is associated with the core the holoenzyme is formed, which can initiate transcription. Requires Mg(2+) as cofactor. It depends on Zn(2+) as a cofactor.

The protein resides in the plastid. It localises to the chloroplast. It carries out the reaction RNA(n) + a ribonucleoside 5'-triphosphate = RNA(n+1) + diphosphate. In terms of biological role, DNA-dependent RNA polymerase catalyzes the transcription of DNA into RNA using the four ribonucleoside triphosphates as substrates. The chain is DNA-directed RNA polymerase subunit beta' from Jasminum nudiflorum (Winter jasmine).